A 672-amino-acid chain; its full sequence is Cytadherence high molecular weight protein 3 (672 aa).

25 tandem repeats follow at residues 98–100, 106–108, 160–162, 197–199, 206–208, 211–213, 221–223, 226–228, 235–237, 249–251, 288–290, 310–319, 312–315, 316–318, 322–324, 330–339, 332–335, 336–338, 354–358, 385–389, 396–400, 402–404, 413–415, 424–428, and 454–456. A 9 X 3 AA repeats OF Y-D-Q region spans residues 98-251; that stretch reads YDQVNNTFYD…NAYNTQNYDQ (154 aa). The interval 160-456 is 8 X 3 AA repeats of P-V-V; the sequence is PVVDPDATPE…QTTPAVPPVV (297 aa). The disordered stretch occupies residues 177-197; that stretch reads GLDPLPQAPDEYQDTTAPPAY. The segment at 310-339 is 2 X 10 AA repeats of V-E-P-T-P-T-P-V-V-E; it reads VEPTPTPVVETAPVVEAPKVVEPTPTPVVE. Residues 312–428 are 6 X 5 AA repeats of P-X-P-X-P; the sequence is PTPTPVVETA…PKVVTPTPAP (117 aa).

The protein localises to the cell projection. It localises to the attachment organelle membrane. Component of the cytoskeleton-like structure which stabilizes the shape of the wall-less mycoplasma. This cytoskeleton-like network of accessory proteins containing HMW proteins 1 to 5 allows the proper anchoring of cytadhesin proteins in the mycoplasmal membrane at the attachment organelle. Essential for successful surface parasitism. In Mycoplasma pneumoniae (strain ATCC 29342 / M129 / Subtype 1) (Mycoplasmoides pneumoniae), this protein is Cytadherence high molecular weight protein 3 (hmw3).